The chain runs to 467 residues: GTPase Der (467 aa).

2 consecutive EngA-type G domains span residues 25–188 (PVVA…PEAP) and 199–372 (RRVA…ASWE). GTP contacts are provided by residues 31-38 (GRPNVGKS), 78-82 (DTGGW), 140-143 (NKAD), 205-212 (GRPNVGKS), 252-256 (DTAGL), and 317-320 (NKWD). The 83-residue stretch at 373–455 (TRVPTAQLNA…PIEISVRARK (83 aa)) folds into the KH-like domain.

The protein belongs to the TRAFAC class TrmE-Era-EngA-EngB-Septin-like GTPase superfamily. EngA (Der) GTPase family. In terms of assembly, associates with the 50S ribosomal subunit.

Functionally, GTPase that plays an essential role in the late steps of ribosome biogenesis. The polypeptide is GTPase Der (Salinispora tropica (strain ATCC BAA-916 / DSM 44818 / JCM 13857 / NBRC 105044 / CNB-440)).